Here is a 114-residue protein sequence, read N- to C-terminus: Large ribosomal subunit protein bL19 (114 aa).

The protein belongs to the bacterial ribosomal protein bL19 family.

Functionally, this protein is located at the 30S-50S ribosomal subunit interface and may play a role in the structure and function of the aminoacyl-tRNA binding site. The protein is Large ribosomal subunit protein bL19 of Thermobifida fusca (strain YX).